The primary structure comprises 163 residues: Nucleotide-binding protein GK0742 (163 aa).

It belongs to the YajQ family.

Functionally, nucleotide-binding protein. This Geobacillus kaustophilus (strain HTA426) protein is Nucleotide-binding protein GK0742.